Reading from the N-terminus, the 195-residue chain is Interferon tau-1 (195 aa).

A signal peptide spans 1–23 (MAFVLSLLMALVLVSYGPGGSLG). Cystine bridges form between Cys24–Cys122 and Cys52–Cys162.

This sequence belongs to the alpha/beta interferon family. IFN-alphaII subfamily. In terms of tissue distribution, constitutively and exclusively expressed in the mononuclear cells of the extraembryonic trophectoderm.

The protein resides in the secreted. Its function is as follows. Paracrine hormone primarily responsible for maternal recognition of pregnancy. Interacts with endometrial receptors, probably type I interferon receptors, and blocks estrogen receptor expression, preventing the estrogen-induced increase in oxytocin receptor expression in the endometrium. This results in the suppression of the pulsatile endometrial release of the luteolytic hormone prostaglandin F2-alpha, hindering the regression of the corpus luteum (luteolysis) and therefore a return to ovarian cyclicity. This, and a possible direct effect of IFN-tau on prostaglandin synthesis, leads in turn to continued ovarian progesterone secretion, which stimulates the secretion by the endometrium of the nutrients required for the growth of the conceptus. In summary, displays particularly high antiviral and antiproliferative potency concurrently with particular weak cytotoxicity, high antiluteolytic activity and immunomodulatory properties. In contrast with other IFNs, IFN-tau is not virally inducible. This Ovis aries (Sheep) protein is Interferon tau-1 (IFNT1).